The following is a 327-amino-acid chain: Aspartate carbamoyltransferase catalytic subunit (327 aa).

Arg67 and Thr68 together coordinate carbamoyl phosphate. Lys95 is an L-aspartate binding site. 3 residues coordinate carbamoyl phosphate: Arg117, His145, and Gln148. 2 residues coordinate L-aspartate: Arg178 and Arg232. Carbamoyl phosphate is bound by residues Gly273 and Pro274.

It belongs to the aspartate/ornithine carbamoyltransferase superfamily. ATCase family. As to quaternary structure, heterododecamer (2C3:3R2) of six catalytic PyrB chains organized as two trimers (C3), and six regulatory PyrI chains organized as three dimers (R2).

The catalysed reaction is carbamoyl phosphate + L-aspartate = N-carbamoyl-L-aspartate + phosphate + H(+). Its pathway is pyrimidine metabolism; UMP biosynthesis via de novo pathway; (S)-dihydroorotate from bicarbonate: step 2/3. Its function is as follows. Catalyzes the condensation of carbamoyl phosphate and aspartate to form carbamoyl aspartate and inorganic phosphate, the committed step in the de novo pyrimidine nucleotide biosynthesis pathway. This chain is Aspartate carbamoyltransferase catalytic subunit, found in Parvibaculum lavamentivorans (strain DS-1 / DSM 13023 / NCIMB 13966).